The following is a 182-amino-acid chain: CKLF-like MARVEL transmembrane domain-containing protein 3 (182 aa).

Over residues Met1–Pro12 the composition is skewed to acidic residues. The disordered stretch occupies residues Met1–Gly21. Residues Phe36 to Ala155 form the MARVEL domain. 3 helical membrane-spanning segments follow: residues Ala64–Ala84, Met101–Ile121, and Ala131–Phe151.

The protein belongs to the chemokine-like factor family. As to expression, expressed in the leukocytes, placenta and testis.

Its subcellular location is the membrane. This Homo sapiens (Human) protein is CKLF-like MARVEL transmembrane domain-containing protein 3 (CMTM3).